The sequence spans 196 residues: Imidazole glycerol phosphate synthase subunit HisH (196 aa).

One can recognise a Glutamine amidotransferase type-1 domain in the interval N2–I196. C77 serves as the catalytic Nucleophile. Residues H178 and E180 contribute to the active site.

Heterodimer of HisH and HisF.

Its subcellular location is the cytoplasm. It carries out the reaction 5-[(5-phospho-1-deoxy-D-ribulos-1-ylimino)methylamino]-1-(5-phospho-beta-D-ribosyl)imidazole-4-carboxamide + L-glutamine = D-erythro-1-(imidazol-4-yl)glycerol 3-phosphate + 5-amino-1-(5-phospho-beta-D-ribosyl)imidazole-4-carboxamide + L-glutamate + H(+). The catalysed reaction is L-glutamine + H2O = L-glutamate + NH4(+). Its pathway is amino-acid biosynthesis; L-histidine biosynthesis; L-histidine from 5-phospho-alpha-D-ribose 1-diphosphate: step 5/9. In terms of biological role, IGPS catalyzes the conversion of PRFAR and glutamine to IGP, AICAR and glutamate. The HisH subunit catalyzes the hydrolysis of glutamine to glutamate and ammonia as part of the synthesis of IGP and AICAR. The resulting ammonia molecule is channeled to the active site of HisF. The sequence is that of Imidazole glycerol phosphate synthase subunit HisH from Blochmanniella pennsylvanica (strain BPEN).